Consider the following 404-residue polypeptide: Acetate kinase (404 aa).

A Mg(2+)-binding site is contributed by Asn8. An ATP-binding site is contributed by Lys15. Arg92 provides a ligand contact to substrate. Asp149 serves as the catalytic Proton donor/acceptor. Residues 207 to 211 (HLGSG), 282 to 284 (DMR), and 327 to 331 (GIGEN) each bind ATP. Residue Glu378 coordinates Mg(2+).

It belongs to the acetokinase family. In terms of assembly, homodimer. The cofactor is Mg(2+). Mn(2+) serves as cofactor.

The protein resides in the cytoplasm. The catalysed reaction is acetate + ATP = acetyl phosphate + ADP. Its pathway is metabolic intermediate biosynthesis; acetyl-CoA biosynthesis; acetyl-CoA from acetate: step 1/2. In terms of biological role, catalyzes the formation of acetyl phosphate from acetate and ATP. Can also catalyze the reverse reaction. The chain is Acetate kinase from Nitrobacter hamburgensis (strain DSM 10229 / NCIMB 13809 / X14).